The primary structure comprises 545 residues: Heparanase (545 aa).

The first 37 residues, 1–37 (MLACRKPGLRPPLLLLLPLLGPLGPCSPGTPAAAAPA), serve as a signal peptide directing secretion. 64-66 (DAN) is a heparan sulfate group binding site. Positions 112–159 (PAFEERSYWLSQSNQDICKSGSIPSDVEEKLRLEWPFQEQVLLREQYQ) are cleaved as a propeptide — linker peptide. Residues C129 and C181 are joined by a disulfide bond. 160–164 (KKFTN) contributes to the heparan sulfate group binding site. N164 and N219 each carry an N-linked (GlcNAc...) asparagine glycan. E227 acts as the Proton donor in catalysis. Heparan sulfate group is bound by residues 272–282 (QPRRNTVKMLK), H298, and R305. Positions 290 to 419 (EVIDSVTWHH…LLFKKLVGNK (130 aa)) are required for heterodimerization with the heparanase 8 kDa subunit. E345 (nucleophile) is an active-site residue. Residues 350-352 (FGG) and 391-393 (GNY) each bind heparan sulfate group. Residues C439 and C544 are joined by a disulfide bond. The N-linked (GlcNAc...) asparagine glycan is linked to N461. Residues 529 to 545 (FSYGFFVIRNAKVAACI) are required for transferring proheparanase to the Golgi apparatus, secretion and subsequent enzyme activity and for enhancement of PKB/AKT1 phosphorylation.

Belongs to the glycosyl hydrolase 79 family. In terms of assembly, heterodimer; heterodimer formation between the 8 kDa and the 50 kDa subunits is required for enzyme activity. Interacts with TF; the interaction, inhibited by heparin, enhances the generation of activated factor X and activates coagulation. Interacts with HRG; the interaction is enhanced at acidic pH, partially inhibits binding of HPSE to cell surface receptors and modulates its enzymatic activity. Interacts with SDC1; the interaction enhances the shedding of SDC1. Interacts with HPSE2. Proteolytically processed. The cleavage of the 65 kDa form leads to the generation of a linker peptide, and the 8 kDa and the 50 kDa products. The active form, the 8/50 kDa heterodimer, is resistant to degradation. Complete removal of the linker peptide appears to be a prerequisite to the complete activation of the enzyme. In terms of processing, N-glycosylated. Glycosylation of the 50 kDa subunit appears to be essential for its solubility. As to expression, highly expressed in placenta and weakly in the kidney, lung, spleen and uterus.

The protein resides in the lysosome membrane. It localises to the secreted. It is found in the nucleus. The enzyme catalyses endohydrolysis of (1-&gt;4)-beta-D-glycosidic bonds of heparan sulfate chains in heparan sulfate proteoglycan.. Its activity is regulated as follows. Inhibited by laminarin sulfate and, to a lower extent, by heparin, sulfamin and EDTA. Activated by calcium and magnesium. In terms of biological role, endoglycosidase that cleaves heparan sulfate proteoglycans (HSPGs) into heparan sulfate side chains and core proteoglycans. Participates in extracellular matrix (ECM) degradation and remodeling. Selectively cleaves the linkage between a glucuronic acid unit and an N-sulfo glucosamine unit carrying either a 3-O-sulfo or a 6-O-sulfo group. Can also cleave the linkage between a glucuronic acid unit and an N-sulfo glucosamine unit carrying a 2-O-sulfo group, but not linkages between a glucuronic acid unit and a 2-O-sulfated iduronic acid moiety. Essentially inactive at neutral pH but becomes active under acidic conditions such as during tumor invasion and in inflammatory processes. Facilitates cell migration associated with metastasis, wound healing and inflammation. Enhances shedding of syndecans. Acts as a procoagulant by enhancing the generation of activated factor X/F10 in the presence of tissue factor/TF and activated factor VII/F7. Independent of its enzymatic activity, increases cell adhesion to the extracellular matrix (ECM). Enhances AKT1/PKB phosphorylation, possibly via interaction with a lipid raft-resident receptor. Plays a role in the regulation of osteogenesis. Enhances angiogenesis through up-regulation of SRC-mediated activation of VEGF. Implicated in hair follicle inner root sheath differentiation and hair homeostasis. This chain is Heparanase (HPSE), found in Bos taurus (Bovine).